Consider the following 200-residue polypeptide: Glycerol-3-phosphate acyltransferase (200 aa).

5 consecutive transmembrane segments (helical) span residues 1–21 (MITV…FAVV), 51–71 (VAAA…VVVA), 84–104 (VIAS…FLAF), 116–136 (ILLG…IIVA), and 159–179 (FLLQ…LLIL).

Belongs to the PlsY family. As to quaternary structure, probably interacts with PlsX.

Its subcellular location is the cell inner membrane. The catalysed reaction is an acyl phosphate + sn-glycerol 3-phosphate = a 1-acyl-sn-glycero-3-phosphate + phosphate. Its pathway is lipid metabolism; phospholipid metabolism. Functionally, catalyzes the transfer of an acyl group from acyl-phosphate (acyl-PO(4)) to glycerol-3-phosphate (G3P) to form lysophosphatidic acid (LPA). This enzyme utilizes acyl-phosphate as fatty acyl donor, but not acyl-CoA or acyl-ACP. This is Glycerol-3-phosphate acyltransferase from Nitrosomonas eutropha (strain DSM 101675 / C91 / Nm57).